The primary structure comprises 432 residues: Adenylosuccinate synthetase (432 aa).

GTP is bound by residues glycine 13–lysine 19 and glycine 41–threonine 43. The active-site Proton acceptor is the aspartate 14. Mg(2+) contacts are provided by aspartate 14 and glycine 41. Residues aspartate 14–lysine 17, asparagine 39–histidine 42, threonine 130, arginine 144, glutamine 225, threonine 240, and arginine 304 contribute to the IMP site. Histidine 42 acts as the Proton donor in catalysis. Residue alanine 300 to arginine 306 participates in substrate binding. Residues arginine 306, lysine 332–aspartate 334, and serine 415–glycine 417 each bind GTP.

It belongs to the adenylosuccinate synthetase family. In terms of assembly, homodimer. Mg(2+) serves as cofactor.

It localises to the cytoplasm. The enzyme catalyses IMP + L-aspartate + GTP = N(6)-(1,2-dicarboxyethyl)-AMP + GDP + phosphate + 2 H(+). It participates in purine metabolism; AMP biosynthesis via de novo pathway; AMP from IMP: step 1/2. Functionally, plays an important role in the de novo pathway of purine nucleotide biosynthesis. Catalyzes the first committed step in the biosynthesis of AMP from IMP. This chain is Adenylosuccinate synthetase, found in Baumannia cicadellinicola subsp. Homalodisca coagulata.